A 319-amino-acid chain; its full sequence is Transmembrane and ubiquitin-like domain-containing protein 2 (319 aa).

The chain crosses the membrane as a helical span at residues 36-56 (VMVVAGVVALTLALVLAWLST). 2 disordered regions span residues 88 to 128 (VNQG…ARGE) and 145 to 165 (RQAG…DGSC). Residues 95–111 (PTEHPHPSGGNDDKAEE) are compositionally biased toward basic and acidic residues. The region spanning 173–246 (INVRLKFLND…IHCHRSPPGA (74 aa)) is the Ubiquitin-like domain. Helical transmembrane passes span 264–284 (LGVN…GVVW) and 298–318 (ATIS…GMYG).

The protein resides in the membrane. The protein is Transmembrane and ubiquitin-like domain-containing protein 2 (Tmub2) of Mus musculus (Mouse).